A 195-amino-acid chain; its full sequence is Ribonuclease HII (195 aa).

In terms of domain architecture, RNase H type-2 spans 6 to 195 (SLIAGVDEVG…KSFISRLEIN (190 aa)). Positions 12, 13, and 108 each coordinate a divalent metal cation.

The protein belongs to the RNase HII family. Requires Mn(2+) as cofactor. Mg(2+) serves as cofactor.

Its subcellular location is the cytoplasm. It carries out the reaction Endonucleolytic cleavage to 5'-phosphomonoester.. Endonuclease that specifically degrades the RNA of RNA-DNA hybrids. In Prochlorococcus marinus (strain NATL1A), this protein is Ribonuclease HII.